Reading from the N-terminus, the 330-residue chain is Phytanoyl-CoA hydroxylase-interacting protein (330 aa).

A Fibronectin type-III domain is found at Thr-6–Tyr-115. Residues Asn-14 and Asn-325 are each glycosylated (N-linked (GlcNAc...) asparagine).

It belongs to the PHYHIP family. As to quaternary structure, interacts with PHYH and ADGRB1. Highly expressed in the brain.

Its function is as follows. Its interaction with PHYH suggests a role in the development of the central system. The sequence is that of Phytanoyl-CoA hydroxylase-interacting protein (PHYHIP) from Homo sapiens (Human).